Consider the following 314-residue polypeptide: DNA-directed RNA polymerase subunit alpha (314 aa).

The segment at 1–228 is alpha N-terminal domain (alpha-NTD); the sequence is MIEFEKPNIH…EHLAMFVDLT (228 aa). The tract at residues 245–314 is alpha C-terminal domain (alpha-CTD); that stretch reads KEKMLEMTIE…DLGVSFRQDD (70 aa).

Belongs to the RNA polymerase alpha chain family. As to quaternary structure, homodimer. The RNAP catalytic core consists of 2 alpha, 1 beta, 1 beta' and 1 omega subunit. When a sigma factor is associated with the core the holoenzyme is formed, which can initiate transcription.

The catalysed reaction is RNA(n) + a ribonucleoside 5'-triphosphate = RNA(n+1) + diphosphate. Functionally, DNA-dependent RNA polymerase catalyzes the transcription of DNA into RNA using the four ribonucleoside triphosphates as substrates. The sequence is that of DNA-directed RNA polymerase subunit alpha from Limosilactobacillus reuteri (strain DSM 20016) (Lactobacillus reuteri).